The primary structure comprises 354 residues: Glycerol-1-phosphate dehydrogenase [NAD(P)+] (354 aa).

Residues 102-106 (GRSID) and 124-127 (TAAS) contribute to the NAD(+) site. Residue D129 coordinates substrate. Position 133 (S133) interacts with NAD(+). D176 contacts substrate. The Zn(2+) site is built by D176 and H256. Position 260 (H260) interacts with substrate. H272 is a Zn(2+) binding site.

This sequence belongs to the glycerol-1-phosphate dehydrogenase family. Zn(2+) is required as a cofactor.

Its subcellular location is the cytoplasm. The enzyme catalyses sn-glycerol 1-phosphate + NAD(+) = dihydroxyacetone phosphate + NADH + H(+). It carries out the reaction sn-glycerol 1-phosphate + NADP(+) = dihydroxyacetone phosphate + NADPH + H(+). It functions in the pathway membrane lipid metabolism; glycerophospholipid metabolism. Its function is as follows. Catalyzes the NAD(P)H-dependent reduction of dihydroxyacetonephosphate (DHAP or glycerone phosphate) to glycerol 1-phosphate (G1P). The G1P thus generated is used as the glycerophosphate backbone of phospholipids in the cellular membranes of Archaea. The chain is Glycerol-1-phosphate dehydrogenase [NAD(P)+] from Methanothrix thermoacetophila (strain DSM 6194 / JCM 14653 / NBRC 101360 / PT) (Methanosaeta thermophila).